Consider the following 140-residue polypeptide: FlaA locus uncharacterized protein YlxG (140 aa).

The disordered stretch occupies residues 1–21 (MTSISSEYKLPEKTNTVSTNN).

It belongs to the FlgD family.

The polypeptide is FlaA locus uncharacterized protein YlxG (ylxG) (Bacillus subtilis (strain 168)).